The primary structure comprises 309 residues: DDRGK domain-containing protein 1 (309 aa).

At 1-2 (MD) the chain is on the lumenal side. Residues 3-23 (LIILVGIAVALLVVIVTLYLL) form a helical membrane-spanning segment. Topologically, residues 24-309 (QKKNAAPETK…ISAGGGEASS (286 aa)) are cytoplasmic. 2 disordered regions span residues 32 to 53 (TKVA…VPRR) and 79 to 175 (ALPA…KEER). Positions 87-96 (DHEDEGQVDG) are enriched in acidic residues. A compositionally biased stretch (basic and acidic residues) spans 107–175 (LDEKMGAKKR…DAERLAKEER (69 aa)). Residues 120–177 (EAKEQKRLQREQELHDREQRKVKEAKEEAERKQQEDLEAEAERKRVDAERLAKEERER) adopt a coiled-coil conformation.

This sequence belongs to the DDRGK1 family. In terms of assembly, interacts with Atg9; the interaction is transient.

It localises to the endoplasmic reticulum membrane. Its function is as follows. Substrate adapter for ufmylation, the covalent attachment of the ubiquitin-like modifier UFM1 to substrate proteins. Required for ufmylation of Atg9; protects the nervous system during aging, possibly by stabilizing Atg9 and supporting its function. This chain is DDRGK domain-containing protein 1, found in Drosophila melanogaster (Fruit fly).